A 532-amino-acid chain; its full sequence is P granule abnormality protein 2 (532 aa).

Interacts with pgl-1 and pgl-3; association with either pgl-1 or pgl-3 is not required for P-granule localization. In terms of tissue distribution, highly expressed in the germline.

The protein localises to the cytoplasmic granule. Functionally, transient component of P-granule which is involved in germline development. This is P granule abnormality protein 2 from Caenorhabditis elegans.